We begin with the raw amino-acid sequence, 168 residues long: NADH dehydrogenase [ubiquinone] 1 alpha subcomplex assembly factor 2 (168 aa).

Basic and acidic residues predominate over residues 108–118 (KEKLLQEESNK). A disordered region spans residues 108-168 (KEKLLQEESN…MPHGDKGHSQ (61 aa)). A Phosphoserine modification is found at Ser-133. Over residues 144 to 155 (ESPTSTGKTFQP) the composition is skewed to polar residues.

It belongs to the complex I NDUFA12 subunit family. As to quaternary structure, interacts with ARMC9.

Its subcellular location is the mitochondrion. Its function is as follows. Acts as a molecular chaperone for mitochondrial complex I assembly. Complex I functions in the transfer of electrons from NADH to the respiratory chain. The immediate electron acceptor for the enzyme is believed to be ubiquinone. Is involved in the initial steps of cilia formation, including removal of CP110 from the mother centrioles, docking of membrane vesicles to the mother centrioles, and establishment of the transition zone. The protein is NADH dehydrogenase [ubiquinone] 1 alpha subcomplex assembly factor 2 (NDUFAF2) of Bos taurus (Bovine).